Consider the following 34-residue polypeptide: Photosystem II reaction center protein Psb30 (34 aa).

The chain crosses the membrane as a helical span at residues 6 to 26 (VIGQLVSTGAIMLLGPAIIIL).

It belongs to the Psb30/Ycf12 family. In terms of assembly, PSII is composed of 1 copy each of membrane proteins PsbA, PsbB, PsbC, PsbD, PsbE, PsbF, PsbH, PsbI, PsbJ, PsbK, PsbL, PsbM, PsbT, PsbX, PsbY, PsbZ, Psb30/Ycf12, peripheral proteins of the oxygen-evolving complex and a large number of cofactors. It forms dimeric complexes.

It is found in the plastid. Its subcellular location is the chloroplast thylakoid membrane. In terms of biological role, a core subunit of photosystem II (PSII), probably helps stabilize the reaction center. The sequence is that of Photosystem II reaction center protein Psb30 from Thalassiosira pseudonana (Marine diatom).